The following is a 387-amino-acid chain: MSHRKYEAPRHGHLGFLPRKRAASIRARVKAFPKDDRSKPVALTSFLGYKAGMTTIVRDLDRPGSKFHKREVVEAVTVVDTPPVVVVGVVGYVETPRGLRSLTTVWAEHLSDEVKRRFYKNWYKSKKKAFTKYSAKYAQDGAGIERELARIKKYASVVRVLVHTQIRKTPLAQKKAHLAEIQLNGGSISEKVDWAREHFEKTVAVDSVFEQNEMIDAIAVTKGHGFEGVTHRWGTKKLPRKTHRGLRKVACIGAWHPAHVMWSVARAGQRGYHSRTSINHKIYRVGKGDDEANGATSFDRTKKTITPMGGFVHYGEIKNDFIMVKGCIPGNRKRIVTLRKSLYTNTSRKALEEVSLKWIDTASKFGKGRFQTPAEKHAFMGTLKKDL.

S24 carries the phosphoserine modification. K39 participates in a covalent cross-link: Glycyl lysine isopeptide (Lys-Gly) (interchain with G-Cter in ubiquitin). T103 bears the Phosphothreonine mark. K136 is covalently cross-linked (Glycyl lysine isopeptide (Lys-Gly) (interchain with G-Cter in ubiquitin)). Residue S156 is modified to Phosphoserine. At H243 the chain carries Pros-methylhistidine. S297 is modified (phosphoserine).

The protein belongs to the universal ribosomal protein uL3 family. As to quaternary structure, component of the large ribosomal subunit (LSU). Mature yeast ribosomes consist of a small (40S) and a large (60S) subunit. The 40S small subunit contains 1 molecule of ribosomal RNA (18S rRNA) and 33 different proteins (encoded by 57 genes). The large 60S subunit contains 3 rRNA molecules (25S, 5.8S and 5S rRNA) and 46 different proteins (encoded by 81 genes). uL3 forms together with ES39L one of the contact sites for the signal recognition particle that targets ribosomes to the endoplasmic reticulum membrane. In terms of processing, methylation at His-243 by HPM1 is required for proper 60S subunit assembly and promotes translational elongation fidelity.

The protein localises to the cytoplasm. Component of the ribosome, a large ribonucleoprotein complex responsible for the synthesis of proteins in the cell. The small ribosomal subunit (SSU) binds messenger RNAs (mRNAs) and translates the encoded message by selecting cognate aminoacyl-transfer RNA (tRNA) molecules. The large subunit (LSU) contains the ribosomal catalytic site termed the peptidyl transferase center (PTC), which catalyzes the formation of peptide bonds, thereby polymerizing the amino acids delivered by tRNAs into a polypeptide chain. The nascent polypeptides leave the ribosome through a tunnel in the LSU and interact with protein factors that function in enzymatic processing, targeting, and the membrane insertion of nascent chains at the exit of the ribosomal tunnel. uL3 plays a role in coordinating processes of accommodating the aminoacyl-tRNA in the PTC. The protein is Large ribosomal subunit protein uL3 of Saccharomyces cerevisiae (strain ATCC 204508 / S288c) (Baker's yeast).